The following is a 231-amino-acid chain: PX domain-containing protein 1 (231 aa).

The PX domain maps to 1–134 (MASAVFEGTS…TFFERSPLDQ (134 aa)).

This chain is PX domain-containing protein 1 (PXDC1), found in Bos taurus (Bovine).